A 213-amino-acid chain; its full sequence is tRNA (guanine-N(7)-)-methyltransferase (213 aa).

Residues E44, E69, D96, and D118 each contribute to the S-adenosyl-L-methionine site. The active site involves D118. Substrate contacts are provided by residues K122, D154, and 191–194; that span reads TEYE.

Belongs to the class I-like SAM-binding methyltransferase superfamily. TrmB family.

It catalyses the reaction guanosine(46) in tRNA + S-adenosyl-L-methionine = N(7)-methylguanosine(46) in tRNA + S-adenosyl-L-homocysteine. The protein operates within tRNA modification; N(7)-methylguanine-tRNA biosynthesis. Its function is as follows. Catalyzes the formation of N(7)-methylguanine at position 46 (m7G46) in tRNA. The sequence is that of tRNA (guanine-N(7)-)-methyltransferase from Exiguobacterium sibiricum (strain DSM 17290 / CCUG 55495 / CIP 109462 / JCM 13490 / 255-15).